A 652-amino-acid chain; its full sequence is MIKLKLPDGSVREHEVPLDGLAFAESIAKSLAKKAVAIKIDGQMKDLSTVIDRDAEVEIVTRETPDGVDLLRHDASHVMAEAVQELFPGTQVTIGPVIENGFYYDFARAEPFKAEDLEKIEQRMREIVDRDETITREVWDRDAAVEYFKKIGEIYKAEIIASIPAGEQVSVYRQGNWLDLCRGPHLPSTGKLGKAFKLTKLAGAYWRGDSRNEMLQRIYGTCWANENDLKAYLTMVEEAERRDHRKIGREMDLFHLQEEAQGSVFWHPKGWRIWQALEQYVRRRIDAAGYVEVRTPQLLDSKFWEQSGHWGKYRENMFVVPDEVPSTDEDAPVLSGKAKLMAIKPMNCPAHIQIFKQGVKSYRDLPLRMAEFGCCHRNEPHGALHGLMRVRQMTQDDAHIFCTEDQIKEETEAFVALLESVYEDMGFTGTKLRLATRPDVRAGTDETWDKAEKALEEALKALGKEFDFAPGEGAFYGPKLEFHLRDAIGRSWQLGTLQLDFVLPERLDASYIGEDGNKHRPVMLHRAILGSLERFIGILIENYEGRFPMWLAPVQAVVTTITSDADPYAEEMLQKLRDAGIRAELDLRNEKINYKVREHSVAKVPAIFVAGKREAEEGTVSIRRLGSQQQQTMKLDEAIKALAEEATPPDMR.

The 61-residue stretch at 1–61 (MIKLKLPDGS…DRDAEVEIVT (61 aa)) folds into the TGS domain. The tract at residues 243–548 (DHRKIGREMD…LIENYEGRFP (306 aa)) is catalytic. Positions 348, 399, and 525 each coordinate Zn(2+).

The protein belongs to the class-II aminoacyl-tRNA synthetase family. In terms of assembly, homodimer. Zn(2+) serves as cofactor.

The protein resides in the cytoplasm. It catalyses the reaction tRNA(Thr) + L-threonine + ATP = L-threonyl-tRNA(Thr) + AMP + diphosphate + H(+). Catalyzes the attachment of threonine to tRNA(Thr) in a two-step reaction: L-threonine is first activated by ATP to form Thr-AMP and then transferred to the acceptor end of tRNA(Thr). Also edits incorrectly charged L-seryl-tRNA(Thr). The protein is Threonine--tRNA ligase of Parvibaculum lavamentivorans (strain DS-1 / DSM 13023 / NCIMB 13966).